The following is a 389-amino-acid chain: uncharacterized protein (389 aa).

A compositionally biased stretch (polar residues) spans 1–12; sequence MVHATSQSASTE. Disordered regions lie at residues 1-49 and 86-111; these read MVHA…DEDL and HKSM…ANRA. Over residues 40–49 the composition is skewed to acidic residues; sequence ESGDEYDEDL. The span at 93–110 shows a compositional bias: basic residues; the sequence is RGKKKRGKTAKKAKKANR.

This is an uncharacterized protein from Caenorhabditis elegans.